Here is a 340-residue protein sequence, read N- to C-terminus: Cell division protein FtsQ (340 aa).

The interval 1–41 (MQGLNPFHRDQGAGGRPAPVRPAPARPAPVAPRTPRKDPAP) is disordered. Over 1–55 (MQGLNPFHRDQGAGGRPAPVRPAPARPAPVAPRTPRKDPAPSRLAYRLNRMMLRP) the chain is Cytoplasmic. Residues 19–32 (PVRPAPARPAPVAP) show a composition bias toward pro residues. The chain crosses the membrane as a helical span at residues 56–78 (LVRRLVHVGLPAFLAALVAGIWL). The Periplasmic segment spans residues 79–340 (SDDTRRANLT…NAAKAKKKSG (262 aa)). One can recognise a POTRA domain in the interval 104–172 (FMVKMMTIEG…GVLSAVVTER (69 aa)). The disordered stretch occupies residues 308–340 (RQARGQPELGPDGTPLAPEATAGNAAKAKKKSG). The segment covering 324–333 (APEATAGNAA) has biased composition (low complexity).

The protein belongs to the FtsQ/DivIB family. FtsQ subfamily.

It localises to the cell inner membrane. In terms of biological role, essential cell division protein. The protein is Cell division protein FtsQ of Paracoccus denitrificans (strain Pd 1222).